A 931-amino-acid polypeptide reads, in one-letter code: Dual O-methyltransferase/FAD-dependent monooxygenase elcB (931 aa).

The interval 1-463 (MAASTGLSTV…TTDKARPNGD (463 aa)) is O-methyltransferase. Aspartate 254 lines the S-adenosyl-L-methionine pocket. Histidine 304 acts as the Proton acceptor in catalysis. The disordered stretch occupies residues 455 to 474 (TDKARPNGDTTHSGQASIPN). Residues 462 to 474 (GDTTHSGQASIPN) are compositionally biased toward polar residues. Positions 464 to 931 (TTHSGQASIP…TFEELDVAEL (468 aa)) are FAD-dependent monooxygenase. FAD-binding residues include glutamate 520, arginine 604, aspartate 836, and alanine 849.

This sequence in the C-terminal section; belongs to the paxM FAD-dependent monooxygenase family. In the N-terminal section; belongs to the class I-like SAM-binding methyltransferase superfamily. Cation-independent O-methyltransferase family. COMT subfamily.

The enzyme catalyses nor-toralactone + S-adenosyl-L-methionine = toralactone + S-adenosyl-L-homocysteine + H(+). It catalyses the reaction toralactone + NADH + O2 + H(+) = 1-(3,4,5-trihydroxy-7-methoxynaphthalen-2-yl)propan-2-one + CO2 + NAD(+). It participates in secondary metabolite biosynthesis. Dual O-methyltransferase/FAD-dependent monooxygenase; part of the gene cluster that mediates the biosynthesis of elsinochrome C, a perelyenequinone phytotoxin structurally similar to cercosporin. The first step of elsinochrome C biosynthesis is performed by the polyketide synthase elcA which catalyzes the formation of nor-toralactone. The starter unit acyltransferase (SAT) domain of elcA initiates polyketide extension by the selective utilization of acetyl-CoA, which is elongated to the heptaketide in the beta-ketoacyl synthase (KS) domain by successive condensations with six malonyl units introduced by the malonyl acyltransferase (MAT) domain. The product template (PT) domain catalyzes C4-C9 and C2-C11 aldol cyclizations and dehydrations to a trihydroxynaphthalene, which is thought to be delivered to the thioesterase (TE) domain for product release. The bifunctional enzyme elcB then methylates nor-toralactone to toralactone before conducting an unusual oxidative aromatic ring opening. The next step in perylenequinone biosynthesis is an O-methylation at the nascent OH-6 of the elcB product performed by the O-methyltransferase elcD. The oxidative coupling of the two monomeric naphthol units in perylenequinone biosynthesis is catalyzed by the FAD-dependent monooxygenase elcE and the multicopper oxidase elcG. ElcG might catalyze the first intermolecular coupling in a regio- and stereo-selective manner via a phenol radical coupling mechanism and the elcE could forge the second C-C bond intramolecularly via a hydride transfer mechanism. The fasciclin domain-containing protein elcF might also play a role duting this step. The last piece of the puzzle in the biosynthesis of elsinochrome C is the additional annulation by enolate coupling to afford the dihydrobenzo(ghi)perylenequinone system, catalyzed by the FAD-dependent monooxygenase elcH. The polypeptide is Dual O-methyltransferase/FAD-dependent monooxygenase elcB (Phaeosphaeria nodorum (strain SN15 / ATCC MYA-4574 / FGSC 10173) (Glume blotch fungus)).